The chain runs to 478 residues: Shikimate biosynthesis protein AroDE (478 aa).

Positions Met-1–Ala-208 are 3-dehydroquinate dehydratase. Residues Ser-21, Glu-29–Arg-31, and Ala-55–Lys-57 each bind 3-dehydroquinate. Catalysis depends on His-110, which acts as the Proton donor/acceptor; for 3-dehydroquinate dehydratase activity. Lys-133 acts as the Schiff-base intermediate with substrate; for 3-dehydroquinate dehydratase activity in catalysis. Residues Arg-171 and Gln-196 each coordinate 3-dehydroquinate. Residues Ser-209–Pro-478 are shikimate 5-dehydrogenase. Ser-226–Gly-228 is a binding site for shikimate. Lys-277 (proton acceptor; for shikimate dehydrogenase activity) is an active-site residue. Asn-298 and Asp-313 together coordinate shikimate. Residues Gly-337 to Ala-341, Asn-360 to Thr-362, and Gly-435 each bind NADP(+). Gln-442 contributes to the shikimate binding site.

It in the N-terminal section; belongs to the type-I 3-dehydroquinase family. This sequence in the C-terminal section; belongs to the shikimate dehydrogenase family.

The enzyme catalyses 3-dehydroquinate = 3-dehydroshikimate + H2O. It catalyses the reaction shikimate + NADP(+) = 3-dehydroshikimate + NADPH + H(+). Its pathway is metabolic intermediate biosynthesis; chorismate biosynthesis; chorismate from D-erythrose 4-phosphate and phosphoenolpyruvate: step 3/7. It functions in the pathway metabolic intermediate biosynthesis; chorismate biosynthesis; chorismate from D-erythrose 4-phosphate and phosphoenolpyruvate: step 4/7. Functionally, bifunctional enzyme that catalyzes two sequential steps of the aromatic amino acids biosynthetic pathway. In the first reaction, the AroD domain catalyzes the cis-dehydration of 3-dehydroquinate (DHQ) and introduces the first double bond of the aromatic ring to yield 3-dehydroshikimate; in the second reaction, the AroE domain catalyzes the reversible NADPH linked reduction of 3-dehydroshikimate (DHSA) to yield shikimate (SA). This is Shikimate biosynthesis protein AroDE from Chlamydia trachomatis serovar D (strain ATCC VR-885 / DSM 19411 / UW-3/Cx).